We begin with the raw amino-acid sequence, 342 residues long: MSELRVAVLGVGVMGADHVARITSRISGARVSVVNDYVTEKAEQIASEVDGCRAVVDPLDAIADPEVDAVVLATPGSTHEKQLLACLDHRKPVMCEKPLTTDVFTSLEIARREAELECPLIQVGFMRRFDDEYMRLKALLDGGELGQPLVMHCVHRNPGVPSYFDSSLIVKDSLVHEVDVTRYLFGEEIASVQIVRPVSNPAAPEGVIDPQIAILRTVSGRHVDVELFVTTGVAYEVRTEVVGERGSAMIGLDVGLIRKSAPGTWGGLIAPGFRERFGRAYDTEIQRWVDAVRAGTNIDGPTAWDGYAAAAVCAAGVESLESGLPVPVHLAERPDRSTIRPR.

The protein belongs to the Gfo/Idh/MocA family. Homotetramer.

It carries out the reaction myo-inositol + NAD(+) = scyllo-inosose + NADH + H(+). Involved in the oxidation of myo-inositol (MI) to 2-keto-myo-inositol (2KMI or 2-inosose). The chain is Inositol 2-dehydrogenase 2 from Mycolicibacterium vanbaalenii (strain DSM 7251 / JCM 13017 / BCRC 16820 / KCTC 9966 / NRRL B-24157 / PYR-1) (Mycobacterium vanbaalenii).